Here is a 125-residue protein sequence, read N- to C-terminus: Holo-[acyl-carrier-protein] synthase (125 aa).

2 residues coordinate Mg(2+): D8 and E57.

This sequence belongs to the P-Pant transferase superfamily. AcpS family. Mg(2+) is required as a cofactor.

It is found in the cytoplasm. The catalysed reaction is apo-[ACP] + CoA = holo-[ACP] + adenosine 3',5'-bisphosphate + H(+). In terms of biological role, transfers the 4'-phosphopantetheine moiety from coenzyme A to a Ser of acyl-carrier-protein. In Aromatoleum aromaticum (strain DSM 19018 / LMG 30748 / EbN1) (Azoarcus sp. (strain EbN1)), this protein is Holo-[acyl-carrier-protein] synthase.